Here is a 290-residue protein sequence, read N- to C-terminus: Acetyl-coenzyme A carboxylase carboxyl transferase subunit beta (290 aa).

Residues 28-290 (IMTKCPKCKK…SRGGDEWHTN (263 aa)) enclose the CoA carboxyltransferase N-terminal domain. The Zn(2+) site is built by cysteine 32, cysteine 35, cysteine 51, and cysteine 54. A C4-type zinc finger spans residues 32–54 (CPKCKKIMYTKELVKNLRVCISC).

It belongs to the AccD/PCCB family. In terms of assembly, acetyl-CoA carboxylase is a heterohexamer composed of biotin carboxyl carrier protein (AccB), biotin carboxylase (AccC) and two subunits each of ACCase subunit alpha (AccA) and ACCase subunit beta (AccD). Zn(2+) serves as cofactor.

The protein resides in the cytoplasm. The enzyme catalyses N(6)-carboxybiotinyl-L-lysyl-[protein] + acetyl-CoA = N(6)-biotinyl-L-lysyl-[protein] + malonyl-CoA. Its pathway is lipid metabolism; malonyl-CoA biosynthesis; malonyl-CoA from acetyl-CoA: step 1/1. Its function is as follows. Component of the acetyl coenzyme A carboxylase (ACC) complex. Biotin carboxylase (BC) catalyzes the carboxylation of biotin on its carrier protein (BCCP) and then the CO(2) group is transferred by the transcarboxylase to acetyl-CoA to form malonyl-CoA. The sequence is that of Acetyl-coenzyme A carboxylase carboxyl transferase subunit beta from Anoxybacillus flavithermus (strain DSM 21510 / WK1).